A 271-amino-acid polypeptide reads, in one-letter code: 5-deoxy-glucuronate isomerase (271 aa).

It belongs to the isomerase IolB family.

It catalyses the reaction 5-deoxy-D-glucuronate = 5-dehydro-2-deoxy-D-gluconate. Its pathway is polyol metabolism; myo-inositol degradation into acetyl-CoA; acetyl-CoA from myo-inositol: step 4/7. Involved in the isomerization of 5-deoxy-glucuronate (5DG) to 5-dehydro-2-deoxy-D-gluconate (DKG or 2-deoxy-5-keto-D-gluconate). This chain is 5-deoxy-glucuronate isomerase, found in Shouchella clausii (strain KSM-K16) (Alkalihalobacillus clausii).